A 491-amino-acid polypeptide reads, in one-letter code: Glycogen synthase (491 aa).

Lysine 15 lines the ADP-alpha-D-glucose pocket.

The protein belongs to the glycosyltransferase 1 family. Bacterial/plant glycogen synthase subfamily.

The enzyme catalyses [(1-&gt;4)-alpha-D-glucosyl](n) + ADP-alpha-D-glucose = [(1-&gt;4)-alpha-D-glucosyl](n+1) + ADP + H(+). The protein operates within glycan biosynthesis; glycogen biosynthesis. Synthesizes alpha-1,4-glucan chains using ADP-glucose. The sequence is that of Glycogen synthase from Treponema denticola (strain ATCC 35405 / DSM 14222 / CIP 103919 / JCM 8153 / KCTC 15104).